The following is a 369-amino-acid chain: tRNA 2-selenouridine synthase (369 aa).

The Rhodanese domain occupies 12 to 136 (FLDDIPLMDV…LRNFLFETTR (125 aa)). The S-selanylcysteine intermediate role is filled by Cys95.

The protein belongs to the SelU family. Monomer.

It carries out the reaction 5-methylaminomethyl-2-thiouridine(34) in tRNA + selenophosphate + (2E)-geranyl diphosphate + H2O + H(+) = 5-methylaminomethyl-2-selenouridine(34) in tRNA + (2E)-thiogeraniol + phosphate + diphosphate. It catalyses the reaction 5-methylaminomethyl-2-thiouridine(34) in tRNA + (2E)-geranyl diphosphate = 5-methylaminomethyl-S-(2E)-geranyl-thiouridine(34) in tRNA + diphosphate. The catalysed reaction is 5-methylaminomethyl-S-(2E)-geranyl-thiouridine(34) in tRNA + selenophosphate + H(+) = 5-methylaminomethyl-2-(Se-phospho)selenouridine(34) in tRNA + (2E)-thiogeraniol. The enzyme catalyses 5-methylaminomethyl-2-(Se-phospho)selenouridine(34) in tRNA + H2O = 5-methylaminomethyl-2-selenouridine(34) in tRNA + phosphate. In terms of biological role, involved in the post-transcriptional modification of the uridine at the wobble position (U34) of tRNA(Lys), tRNA(Glu) and tRNA(Gln). Catalyzes the conversion of 2-thiouridine (S2U-RNA) to 2-selenouridine (Se2U-RNA). Acts in a two-step process involving geranylation of 2-thiouridine (S2U) to S-geranyl-2-thiouridine (geS2U) and subsequent selenation of the latter derivative to 2-selenouridine (Se2U) in the tRNA chain. In Pseudomonas aeruginosa (strain ATCC 15692 / DSM 22644 / CIP 104116 / JCM 14847 / LMG 12228 / 1C / PRS 101 / PAO1), this protein is tRNA 2-selenouridine synthase.